A 235-amino-acid polypeptide reads, in one-letter code: MQKQEKIIEMFNQIAPTYDKANRILSFGADVAWRKKACQRVMSLYLKKDLKIADIACGTGDMIEIWQESALKMEKNILNIKGIDPSSGMLNVAKEKFPNVEFIKAGAQNLPLESQSLDILSISYGIRNVVERQKALSEFARVLQKDGILVVLEFTKREKGGFIAACRDFYLKNILPSIGGIISKNKSAYEYLPNSIEGFLSKKEFILELKNAGFEMLDYKSFSFGVSSMFIAKKL.

S-adenosyl-L-methionine contacts are provided by T59, D84, and S123.

Belongs to the class I-like SAM-binding methyltransferase superfamily. MenG/UbiE family.

It catalyses the reaction a 2-demethylmenaquinol + S-adenosyl-L-methionine = a menaquinol + S-adenosyl-L-homocysteine + H(+). It carries out the reaction a 2-methoxy-6-(all-trans-polyprenyl)benzene-1,4-diol + S-adenosyl-L-methionine = a 5-methoxy-2-methyl-3-(all-trans-polyprenyl)benzene-1,4-diol + S-adenosyl-L-homocysteine + H(+). It participates in quinol/quinone metabolism; menaquinone biosynthesis; menaquinol from 1,4-dihydroxy-2-naphthoate: step 2/2. It functions in the pathway cofactor biosynthesis; ubiquinone biosynthesis. In terms of biological role, methyltransferase required for the conversion of demethylmenaquinol (DMKH2) to menaquinol (MKH2) and the conversion of 2-polyprenyl-6-methoxy-1,4-benzoquinol (DDMQH2) to 2-polyprenyl-3-methyl-6-methoxy-1,4-benzoquinol (DMQH2). The sequence is that of Ubiquinone/menaquinone biosynthesis C-methyltransferase UbiE from Campylobacter jejuni subsp. jejuni serotype O:2 (strain ATCC 700819 / NCTC 11168).